Here is a 326-residue protein sequence, read N- to C-terminus: Cobalamin biosynthesis protein CobD (326 aa).

4 helical membrane-spanning segments follow: residues 58 to 78 (MRGV…GVVL), 81 to 101 (LFDV…AVFL), 157 to 177 (FSDG…PGLL), and 304 to 324 (VFYR…LPFL).

Belongs to the CobD/CbiB family.

The protein localises to the cell membrane. Its pathway is cofactor biosynthesis; adenosylcobalamin biosynthesis. In terms of biological role, converts cobyric acid to cobinamide by the addition of aminopropanol on the F carboxylic group. The protein is Cobalamin biosynthesis protein CobD of Sinorhizobium fredii (strain NBRC 101917 / NGR234).